Consider the following 120-residue polypeptide: Large ribosomal subunit protein uL18 (120 aa).

This sequence belongs to the universal ribosomal protein uL18 family. In terms of assembly, part of the 50S ribosomal subunit; part of the 5S rRNA/L5/L18/L25 subcomplex. Contacts the 5S and 23S rRNAs.

This is one of the proteins that bind and probably mediate the attachment of the 5S RNA into the large ribosomal subunit, where it forms part of the central protuberance. The protein is Large ribosomal subunit protein uL18 of Allorhizobium ampelinum (strain ATCC BAA-846 / DSM 112012 / S4) (Agrobacterium vitis (strain S4)).